Reading from the N-terminus, the 105-residue chain is Cuticle protein AM1159 (105 aa).

Residues 16–81 (DGNFNYNFQT…PESPLLPVGP (66 aa)) form the Chitin-binding type R&amp;R domain. The segment at 25–46 (TSNGIEDTKTGTPGSQGQSNMQ) is disordered.

Arthrodial membrane.

This Cancer pagurus (Rock crab) protein is Cuticle protein AM1159.